The chain runs to 287 residues: ATP synthase gamma chain (287 aa).

Belongs to the ATPase gamma chain family. F-type ATPases have 2 components, CF(1) - the catalytic core - and CF(0) - the membrane proton channel. CF(1) has five subunits: alpha(3), beta(3), gamma(1), delta(1), epsilon(1). CF(0) has three main subunits: a, b and c.

The protein resides in the cell inner membrane. Functionally, produces ATP from ADP in the presence of a proton gradient across the membrane. The gamma chain is believed to be important in regulating ATPase activity and the flow of protons through the CF(0) complex. This chain is ATP synthase gamma chain, found in Citrobacter koseri (strain ATCC BAA-895 / CDC 4225-83 / SGSC4696).